A 250-amino-acid chain; its full sequence is Anaphase-promoting complex subunit DOC1 (250 aa).

A DOC domain is found at 60-246; the sequence is PTPENLQHMF…LPETNNVFQD (187 aa).

Belongs to the APC10 family. The APC/C is composed of at least 13 subunits that stay tightly associated throughout the cell cycle: APC1, APC2, APC4, APC5, APC9, APC11, CDC16, CDC23, CDC26, CDC27, DOC1, MND2 and SWM1.

It is found in the cytoplasm. The protein localises to the nucleus. It participates in protein modification; protein ubiquitination. Functionally, component of the anaphase promoting complex/cyclosome (APC/C), a cell cycle-regulated E3 ubiquitin-protein ligase complex that controls progression through mitosis and the G1 phase of the cell cycle. The APC/C is thought to confer substrate specificity and, in the presence of ubiquitin-conjugating E2 enzymes, it catalyzes the formation of protein-ubiquitin conjugates that are subsequently degraded by the 26S proteasome. In early mitosis, the APC/C is activated by CDC20 and targets securin PDS1, the B-type cyclin CLB5, and other anaphase inhibitory proteins for proteolysis, thereby triggering the separation of sister chromatids at the metaphase-to-anaphase transition. In late mitosis and in G1, degradation of CLB5 allows activation of the APC/C by CDH1, which is needed to destroy CDC20 and the B-type cyclin CLB2 to allow exit from mitosis and creating the low CDK state necessary for cytokinesis and for reforming prereplicative complexes in G1 prior to another round of replication. DOC1 is required, together with the coactivators CDH1 and CDC20, for recognition and binding of the substrates. This Saccharomyces cerevisiae (strain ATCC 204508 / S288c) (Baker's yeast) protein is Anaphase-promoting complex subunit DOC1 (DOC1).